Reading from the N-terminus, the 213-residue chain is Superoxide dismutase [Fe] (213 aa).

Fe cation contacts are provided by His-26, His-73, Asp-156, and His-160.

This sequence belongs to the iron/manganese superoxide dismutase family. In terms of assembly, homodimer. Fe cation is required as a cofactor.

The catalysed reaction is 2 superoxide + 2 H(+) = H2O2 + O2. Its function is as follows. Destroys superoxide anion radicals which are normally produced within the cells and which are toxic to biological systems. The sequence is that of Superoxide dismutase [Fe] (sodB) from Helicobacter pylori (strain J99 / ATCC 700824) (Campylobacter pylori J99).